Reading from the N-terminus, the 349-residue chain is Neutral protease 2 homolog ACLA_052720 (349 aa).

Positions 1–19 (MQLTVLASAILALAQGALA) are cleaved as a signal peptide. A propeptide spanning residues 20–172 (IPAKAPALDV…PAAINLLDRR (153 aa)) is cleaved from the precursor. Intrachain disulfides connect Cys178–Cys250 and Cys257–Cys275. Residue His300 coordinates Zn(2+). Glu301 is an active-site residue. Zn(2+) is bound by residues His304 and Asp315.

The protein belongs to the peptidase M35 family. The cofactor is Zn(2+).

Its subcellular location is the secreted. It carries out the reaction Preferential cleavage of bonds with hydrophobic residues in P1'. Also 3-Asn-|-Gln-4 and 8-Gly-|-Ser-9 bonds in insulin B chain.. Secreted metalloproteinase that allows assimilation of proteinaceous substrates. Shows high activities on basic nuclear substrates such as histone and protamine. The sequence is that of Neutral protease 2 homolog ACLA_052720 from Aspergillus clavatus (strain ATCC 1007 / CBS 513.65 / DSM 816 / NCTC 3887 / NRRL 1 / QM 1276 / 107).